Reading from the N-terminus, the 508-residue chain is MSEIQRYLQLEISQQQNFLYPLIFQEYIYAFAHDRSFSKSILLENTGYENKFSLLIVKRLITRMYQQNPFIIFPNDSTQNQFFGHNKNFYSPLISEGFAVIVEIPFFIPLIPSLERKKTKIVKSKNLRSIHSIFPFLEDSFSHLNFVLDILISHSVHAEILVQTLRYWVKDASSLHLIRFLLNEYCNWNSFFILKKGSFCFSKRNQRLFLFLYNSHVWEYESIFFFLRNQSSHLESTYSRVLLERISLYGKIEYFVNVFGKVKDFQVNLWLVKDPCMHYVRYQRKSILASRGTSIFITKWKCFLVTFWQWHFSLWFHPRRIYINQLSKTLLEIWGYLSSVQINPSVVRSQILENSFLITNAIKKLDMLVPIIPLIASLANTKFCNVLGHPISKPIRADLSDSHIIGRFGRICRNLSHYHSGSSKKKSLYRIKYILRLSCARTLARKHKSTVRTFLKKSGSKLLEEFLMSEEDVLFLTFPKALSIFGVVYKSRIWYLDILCISDLVNYK.

It belongs to the intron maturase 2 family. MatK subfamily.

The protein localises to the plastid. It is found in the chloroplast. Its function is as follows. Usually encoded in the trnK tRNA gene intron. Probably assists in splicing its own and other chloroplast group II introns. This is Maturase K from Collinsia heterophylla (Purple Chinese houses).